The primary structure comprises 481 residues: RuvB-like helicase 2 (481 aa).

76–83 (GPPSTGKT) lines the ATP pocket.

The protein belongs to the RuvB family. As to quaternary structure, may form heterododecamers with hel-1/rvb1. Component of the SWR1 chromatin remodeling complex, the INO80 chromatin remodeling complex, and of the R2TP complex.

The protein localises to the nucleus. The enzyme catalyses ATP + H2O = ADP + phosphate + H(+). Functionally, DNA helicase which participates in several chromatin remodeling complexes, including the SWR1 and the INO80 complexes. The SWR1 complex mediates the ATP-dependent exchange of histone H2A for the H2A variant H2A.Z leading to transcriptional regulation of selected genes by chromatin remodeling. The INO80 complex remodels chromatin by shifting nucleosomes and is involved in DNA repair. Also involved in pre-rRNA processing. The polypeptide is RuvB-like helicase 2 (hel-2) (Neurospora crassa (strain ATCC 24698 / 74-OR23-1A / CBS 708.71 / DSM 1257 / FGSC 987)).